A 198-amino-acid chain; its full sequence is Imidazoleglycerol-phosphate dehydratase (198 aa).

This sequence belongs to the imidazoleglycerol-phosphate dehydratase family.

Its subcellular location is the cytoplasm. It carries out the reaction D-erythro-1-(imidazol-4-yl)glycerol 3-phosphate = 3-(imidazol-4-yl)-2-oxopropyl phosphate + H2O. It participates in amino-acid biosynthesis; L-histidine biosynthesis; L-histidine from 5-phospho-alpha-D-ribose 1-diphosphate: step 6/9. In Agrobacterium fabrum (strain C58 / ATCC 33970) (Agrobacterium tumefaciens (strain C58)), this protein is Imidazoleglycerol-phosphate dehydratase.